The primary structure comprises 70 residues: Large ribosomal subunit protein bL31 (70 aa).

Zn(2+) is bound by residues Cys16, Cys18, Cys37, and Cys40.

The protein belongs to the bacterial ribosomal protein bL31 family. Type A subfamily. In terms of assembly, part of the 50S ribosomal subunit. It depends on Zn(2+) as a cofactor.

Functionally, binds the 23S rRNA. The polypeptide is Large ribosomal subunit protein bL31 (Shewanella oneidensis (strain ATCC 700550 / JCM 31522 / CIP 106686 / LMG 19005 / NCIMB 14063 / MR-1)).